A 206-amino-acid chain; its full sequence is Orotate phosphoribosyltransferase (206 aa).

Residues Arg-93, Lys-97, His-99, and 119–127 (EDLISTGGT) each bind 5-phospho-alpha-D-ribose 1-diphosphate. Ser-123 contacts orotate.

This sequence belongs to the purine/pyrimidine phosphoribosyltransferase family. PyrE subfamily. Homodimer. Mg(2+) is required as a cofactor.

It carries out the reaction orotidine 5'-phosphate + diphosphate = orotate + 5-phospho-alpha-D-ribose 1-diphosphate. It functions in the pathway pyrimidine metabolism; UMP biosynthesis via de novo pathway; UMP from orotate: step 1/2. Functionally, catalyzes the transfer of a ribosyl phosphate group from 5-phosphoribose 1-diphosphate to orotate, leading to the formation of orotidine monophosphate (OMP). The protein is Orotate phosphoribosyltransferase of Bacillus caldolyticus.